A 134-amino-acid polypeptide reads, in one-letter code: UPF0412 protein YaaI (134 aa).

The signal sequence occupies residues 1-23 (MRSVLTISASLLFGLALSSVAHA).

The protein belongs to the UPF0412 family.

The protein is UPF0412 protein YaaI of Salmonella choleraesuis (strain SC-B67).